Consider the following 151-residue polypeptide: Cytochrome c-type biogenesis protein CcmE 1 (151 aa).

Residues 1 to 8 (MNPLRKKR) are Cytoplasmic-facing. Residues 9-29 (LIIILAILVGVGAAVGLALSA) traverse the membrane as a helical; Signal-anchor for type II membrane protein segment. At 30–151 (LQQNINLFYT…QSAPTPAKEG (122 aa)) the chain is on the periplasmic side. Heme is bound by residues His124 and Tyr128. The interval 131–151 (PEVTKALKDSGQSAPTPAKEG) is disordered.

The protein belongs to the CcmE/CycJ family.

It localises to the cell inner membrane. Heme chaperone required for the biogenesis of c-type cytochromes. Transiently binds heme delivered by CcmC and transfers the heme to apo-cytochromes in a process facilitated by CcmF and CcmH. In Pseudomonas fluorescens (strain Pf0-1), this protein is Cytochrome c-type biogenesis protein CcmE 1.